Consider the following 432-residue polypeptide: Amino-acid acetyltransferase (432 aa).

One can recognise an N-acetyltransferase domain in the interval Glu286–Ser425.

It belongs to the acetyltransferase family. ArgA subfamily.

The protein resides in the cytoplasm. It carries out the reaction L-glutamate + acetyl-CoA = N-acetyl-L-glutamate + CoA + H(+). Its pathway is amino-acid biosynthesis; L-arginine biosynthesis; N(2)-acetyl-L-ornithine from L-glutamate: step 1/4. This chain is Amino-acid acetyltransferase, found in Ectopseudomonas mendocina (strain ymp) (Pseudomonas mendocina).